The sequence spans 434 residues: Na(+)/H(+) antiporter NhaA 1 (434 aa).

Helical transmembrane passes span 30–50 (TGGL…NVAG), 70–90 (LSIE…VTGL), 108–128 (ALPI…FVLV), 141–161 (VGWA…LAVV), 172–192 (FLLT…AIFY), 195–215 (QVHW…TVAV), 286–306 (FAVP…VSGF), 318–338 (VIAG…WLLA), 354–374 (VLGM…IGSL), and 386–406 (VTLG…VVLS).

The protein belongs to the NhaA Na(+)/H(+) (TC 2.A.33) antiporter family.

The protein resides in the cell membrane. It carries out the reaction Na(+)(in) + 2 H(+)(out) = Na(+)(out) + 2 H(+)(in). In terms of biological role, na(+)/H(+) antiporter that extrudes sodium in exchange for external protons. The chain is Na(+)/H(+) antiporter NhaA 1 from Kineococcus radiotolerans (strain ATCC BAA-149 / DSM 14245 / SRS30216).